A 305-amino-acid chain; its full sequence is Ornithine carbamoyltransferase, anabolic (305 aa).

Residues 53-56, Q80, R104, and 131-134 contribute to the carbamoyl phosphate site; these read STRT and HPCQ. Residues N162, D219, and 223–224 each bind L-ornithine; that span reads SM. Carbamoyl phosphate-binding positions include 259-260 and R287; that span reads CL.

This sequence belongs to the aspartate/ornithine carbamoyltransferase superfamily. OTCase family. As to quaternary structure, homotrimer.

The protein localises to the cytoplasm. The catalysed reaction is carbamoyl phosphate + L-ornithine = L-citrulline + phosphate + H(+). It participates in amino-acid biosynthesis; L-arginine biosynthesis; L-arginine from L-ornithine and carbamoyl phosphate: step 1/3. In terms of biological role, reversibly catalyzes the transfer of the carbamoyl group from carbamoyl phosphate (CP) to the N(epsilon) atom of ornithine (ORN) to produce L-citrulline, which is a substrate for argininosuccinate synthetase (ArgG) involved in the final step in arginine biosynthesis. This is Ornithine carbamoyltransferase, anabolic from Pseudomonas aeruginosa (strain ATCC 15692 / DSM 22644 / CIP 104116 / JCM 14847 / LMG 12228 / 1C / PRS 101 / PAO1).